The chain runs to 251 residues: tRNA (guanine-N(1)-)-methyltransferase (251 aa).

S-adenosyl-L-methionine contacts are provided by residues G117 and 137 to 142 (IGDYVL).

It belongs to the RNA methyltransferase TrmD family. As to quaternary structure, homodimer.

Its subcellular location is the cytoplasm. It catalyses the reaction guanosine(37) in tRNA + S-adenosyl-L-methionine = N(1)-methylguanosine(37) in tRNA + S-adenosyl-L-homocysteine + H(+). In terms of biological role, specifically methylates guanosine-37 in various tRNAs. The sequence is that of tRNA (guanine-N(1)-)-methyltransferase from Haemophilus ducreyi (strain 35000HP / ATCC 700724).